A 290-amino-acid polypeptide reads, in one-letter code: Bifunctional protein FolD (290 aa).

NADP(+) contacts are provided by residues 167–169 (GRS), Ser192, and Ile233.

This sequence belongs to the tetrahydrofolate dehydrogenase/cyclohydrolase family. Homodimer.

The catalysed reaction is (6R)-5,10-methylene-5,6,7,8-tetrahydrofolate + NADP(+) = (6R)-5,10-methenyltetrahydrofolate + NADPH. It catalyses the reaction (6R)-5,10-methenyltetrahydrofolate + H2O = (6R)-10-formyltetrahydrofolate + H(+). The protein operates within one-carbon metabolism; tetrahydrofolate interconversion. Functionally, catalyzes the oxidation of 5,10-methylenetetrahydrofolate to 5,10-methenyltetrahydrofolate and then the hydrolysis of 5,10-methenyltetrahydrofolate to 10-formyltetrahydrofolate. This is Bifunctional protein FolD from Azorhizobium caulinodans (strain ATCC 43989 / DSM 5975 / JCM 20966 / LMG 6465 / NBRC 14845 / NCIMB 13405 / ORS 571).